Reading from the N-terminus, the 398-residue chain is Metallophosphoesterase 1 (398 aa).

Residues 25–45 (VCFVSSVLIFCEFFIYYLVIF) form a helical membrane-spanning segment. A divalent metal cation is bound by residues aspartate 75, aspartate 117, asparagine 155, histidine 251, histidine 305, and histidine 307. Residues 359–379 (VFAIYWAAGALLVVLVLAHFQ) traverse the membrane as a helical segment. Positions 394–398 (KHKAA) match the Di-lysine motif motif.

Belongs to the metallophosphoesterase superfamily. MPPE1 family. Mn(2+) serves as cofactor.

Its subcellular location is the endoplasmic reticulum-Golgi intermediate compartment membrane. Functionally, metallophosphoesterase that catalyzes the removal of a side-chain ethanolamine-phosphate (EtNP) from the second mannose of the GPI-anchor protein intermediate. Participates in the glycan remodeling steps of GPI-anchor maturation to allow an efficient transport of GPI-anchor proteins from the endoplasmic reticulum to the Golgi. This Gallus gallus (Chicken) protein is Metallophosphoesterase 1.